Consider the following 251-residue polypeptide: Low molecular mass lipoprotein PBMHPC-21 (251 aa).

A signal peptide spans M1 to A16.

The protein belongs to the 30 kDa lipoprotein family.

It is found in the secreted. This chain is Low molecular mass lipoprotein PBMHPC-21, found in Bombyx mori (Silk moth).